A 251-amino-acid chain; its full sequence is Small ribosomal subunit protein uS2B (251 aa).

S2 carries the post-translational modification N-acetylserine. A compositionally biased stretch (low complexity) spans 214–225 (AVEEASATGATE). Residues 214–251 (AVEEASATGATEEATEEATEETTEATEWAEDNTENATW) form a disordered region. The span at 226–251 (EATEEATEETTEATEWAEDNTENATW) shows a compositional bias: acidic residues.

It belongs to the universal ribosomal protein uS2 family. In terms of assembly, component of the small ribosomal subunit. Mature ribosomes consist of a small (40S) and a large (60S) subunit. The 40S subunit contains about 33 different proteins and 1 molecule of RNA (18S). The 60S subunit contains about 49 different proteins and 3 molecules of RNA (25S, 5.8S and 5S). Interacts with RPS21.

The protein resides in the cytoplasm. Functionally, required for the assembly and/or stability of the 40S ribosomal subunit. Required for the processing of the 20S rRNA-precursor to mature 18S rRNA in a late step of the maturation of 40S ribosomal subunits. The polypeptide is Small ribosomal subunit protein uS2B (Vanderwaltozyma polyspora (strain ATCC 22028 / DSM 70294 / BCRC 21397 / CBS 2163 / NBRC 10782 / NRRL Y-8283 / UCD 57-17) (Kluyveromyces polysporus)).